We begin with the raw amino-acid sequence, 827 residues long: Villin-1 (827 aa).

The tract at residues 1 to 126 (MTKLSAQVKG…IRKGGVASGM (126 aa)) is necessary for homodimerization. The segment at 1-734 (MTKLSAQVKG…YEDLKAELGN (734 aa)) is core. Residues 27-76 (MQMVPVPSNSFGSFFDGDCYVIQAIHKTGSNLSYDIHYWIGQASSQDEQG) form a Gelsolin-like 1 repeat. LPA/PIP2-binding site regions lie at residues 112 to 119 (KKGIVIRK) and 138 to 146 (RLLHVKGKR). Gelsolin-like repeat units lie at residues 148–188 (VVAG…MERL) and 265–309 (VVVR…QEKK). Phosphoserine is present on Ser366. 3 Gelsolin-like repeats span residues 407–457 (NLEL…DEIT), 528–568 (TKAF…DERE), and 631–672 (FLAT…DEKK). A Phosphoserine modification is found at Ser735. The interval 735–827 (SGDWSQITAE…QNLKKEKGLF (93 aa)) is headpiece. In terms of domain architecture, HP spans 761-827 (SGPLPIFPLE…QNLKKEKGLF (67 aa)). Positions 816–824 (KQQNLKKEK) are LPA/PIP2-binding site 3.

This sequence belongs to the villin/gelsolin family. In terms of assembly, monomer. Homodimer; homodimerization is necessary for actin-bundling. Associates with F-actin; phosphorylation at tyrosine residues decreases the association with F-actin. Interacts (phosphorylated at C-terminus tyrosine phosphorylation sites) with PLCG1 (via the SH2 domains). Interacts (phosphorylated form) with PLCG1; the interaction is enhanced by hepatocyte growth factor (HGF). Phosphorylated on tyrosine residues by SRC. The unphosphorylated form increases the initial rate of actin-nucleating activity, whereas the tyrosine-phosphorylated form inhibits actin-nucleating activity, enhances actin-bundling activity and enhances actin-severing activity by reducing high Ca(2+) requirements. The tyrosine-phosphorylated form does not regulate actin-capping activity. Tyrosine phosphorylation is essential for cell migration: tyrosine phosphorylation sites in the N-terminus half regulate actin reorganization and cell morphology, whereas tyrosine phosphorylation sites in the C-terminus half regulate cell migration via interaction with PLCG1. Tyrosine phosphorylation is induced by epidermal growth factor (EGF) and stimulates cell migration.

The protein resides in the cytoplasm. It is found in the cytoskeleton. It localises to the cell projection. The protein localises to the lamellipodium. Its subcellular location is the ruffle. The protein resides in the microvillus. It is found in the filopodium tip. It localises to the filopodium. Functionally, epithelial cell-specific Ca(2+)-regulated actin-modifying protein that modulates the reorganization of microvillar actin filaments. Plays a role in the actin nucleation, actin filament bundle assembly, actin filament capping and severing. Binds phosphatidylinositol 4,5-bisphosphate (PIP2) and lysophosphatidic acid (LPA); binds LPA with higher affinity than PIP2. Binding to LPA increases its phosphorylation by SRC and inhibits all actin-modifying activities. Binding to PIP2 inhibits actin-capping and -severing activities but enhances actin-bundling activity. Regulates the intestinal epithelial cell morphology, cell invasion, cell migration and apoptosis. Protects against apoptosis induced by dextran sodium sulfate (DSS) in the gastrointestinal epithelium. Appears to regulate cell death by maintaining mitochondrial integrity. Enhances hepatocyte growth factor (HGF)-induced epithelial cell motility, chemotaxis and wound repair. The sequence is that of Villin-1 (VIL1) from Bos taurus (Bovine).